The following is a 416-amino-acid chain: Calreticulin (416 aa).

The N-terminal stretch at 1–17 (MLLSVPLLLGLLGLAAA) is a signal peptide. The N-domain stretch occupies residues 18-197 (DPAIYFKEQF…NSQVESGSLE (180 aa)). Residue Q26 coordinates Ca(2+). At K48 the chain carries N6-acetyllysine. Ca(2+)-binding residues include K62 and K64. Position 64 is an N6-(2-hydroxyisobutyryl)lysine (K64). The cysteines at positions 105 and 137 are disulfide-linked. An alpha-D-glucoside-binding residues include Y109, K111, Y128, and D135. N6-acetyllysine is present on K159. A 1-1 repeat occupies 191-202 (VESGSLEDDWDF). The interval 191 to 255 (VESGSLEDDW…DAKKPEDWDE (65 aa)) is 4 X approximate repeats. The tract at residues 193–277 (SGSLEDDWDF…NPEYKGEWKP (85 aa)) is disordered. Residues 198-308 (DDWDFLPPKK…YSPDANIYAY (111 aa)) form a P-domain region. A compositionally biased stretch (basic and acidic residues) spans 207–251 (KIKDPDAAKPEDWDERAKIDDPTDSKPEDWDKPEHIPDPDAKKPE). Residue K209 is modified to N6-acetyllysine. 6 repeat units span residues 210-221 (DPDAAKPEDWDE), 227-238 (DPTDSKPEDWDK), 244-255 (DPDAKKPEDWDE), 259-269 (GEWEPPVIQNP), 273-283 (GEWKPRQIDNP), and 287-297 (GTWIHPEIDNP). Positions 237–270 (DKPEHIPDPDAKKPEDWDEEMDGEWEPPVIQNPE) are interaction with PPIB. Residues 252–261 (DWDEEMDGEW) show a composition bias toward acidic residues. Residues 259 to 297 (GEWEPPVIQNPEYKGEWKPRQIDNPDYKGTWIHPEIDNP) are 3 X approximate repeats. Residues 309-416 (DSFAVLGLDL…DATGQAKDEL (108 aa)) form a C-domain region. Residue D317 coordinates an alpha-D-glucoside. D328 serves as a coordination point for Ca(2+). The segment at 350–416 (TKAAEKQMKD…DATGQAKDEL (67 aa)) is disordered. A compositionally biased stretch (basic and acidic residues) spans 352–379 (AAEKQMKDKQDEEQRLKEEEEDKKRKEE). Residues 380–408 (EEAEDKEDEDDRDEDEDEEDEKEEDEEDA) are compositionally biased toward acidic residues. The Prevents secretion from ER signature appears at 413-416 (KDEL).

Belongs to the calreticulin family. As to quaternary structure, monomer. Component of an EIF2 complex at least composed of CELF1/CUGBP1, CALR, CALR3, EIF2S1, EIF2S2, HSP90B1 and HSPA5. Interacts with GABARAP, NR3C1 and TRIM21. Interacts with PPIB and SPACA9. Interacts (via P-domain) with PDIA5. Interacts with PDIA3/ERp57. Interacts with CLCC1. In terms of tissue distribution, predentin and odontoblast.

The protein localises to the endoplasmic reticulum lumen. It localises to the cytoplasm. The protein resides in the cytosol. Its subcellular location is the secreted. It is found in the extracellular space. The protein localises to the extracellular matrix. It localises to the cell surface. The protein resides in the sarcoplasmic reticulum lumen. Its subcellular location is the cytoplasmic vesicle. It is found in the secretory vesicle. The protein localises to the cortical granule. It localises to the cytolytic granule. Calcium-binding chaperone that promotes folding, oligomeric assembly and quality control in the endoplasmic reticulum (ER) via the calreticulin/calnexin cycle. This lectin interacts transiently with almost all of the monoglucosylated glycoproteins that are synthesized in the ER. Interacts with the DNA-binding domain of NR3C1 and mediates its nuclear export. Involved in maternal gene expression regulation. May participate in oocyte maturation via the regulation of calcium homeostasis. Present in the cortical granules of non-activated oocytes, is exocytosed during the cortical reaction in response to oocyte activation and might participate in the block to polyspermy. This chain is Calreticulin (Calr), found in Rattus norvegicus (Rat).